Here is a 639-residue protein sequence, read N- to C-terminus: Elongation factor 4 (639 aa).

Residues 39–220 form the tr-type G domain; it reads AQIRNFCIIA…EVVRLVPPPT (182 aa). GTP is bound by residues 51–56 and 167–170; these read DHGKST and NKID.

The protein belongs to the TRAFAC class translation factor GTPase superfamily. Classic translation factor GTPase family. LepA subfamily.

It localises to the cell membrane. It carries out the reaction GTP + H2O = GDP + phosphate + H(+). In terms of biological role, required for accurate and efficient protein synthesis under certain stress conditions. May act as a fidelity factor of the translation reaction, by catalyzing a one-codon backward translocation of tRNAs on improperly translocated ribosomes. Back-translocation proceeds from a post-translocation (POST) complex to a pre-translocation (PRE) complex, thus giving elongation factor G a second chance to translocate the tRNAs correctly. Binds to ribosomes in a GTP-dependent manner. In Mycobacterium sp. (strain JLS), this protein is Elongation factor 4.